A 541-amino-acid chain; its full sequence is Glucose-6-phosphate isomerase (541 aa).

The active-site Proton donor is Glu346. Active-site residues include His377 and Lys506.

Belongs to the GPI family.

Its subcellular location is the cytoplasm. It catalyses the reaction alpha-D-glucose 6-phosphate = beta-D-fructose 6-phosphate. It participates in carbohydrate biosynthesis; gluconeogenesis. The protein operates within carbohydrate degradation; glycolysis; D-glyceraldehyde 3-phosphate and glycerone phosphate from D-glucose: step 2/4. Its function is as follows. Catalyzes the reversible isomerization of glucose-6-phosphate to fructose-6-phosphate. This is Glucose-6-phosphate isomerase from Sinorhizobium medicae (strain WSM419) (Ensifer medicae).